A 357-amino-acid chain; its full sequence is Protein RecA (357 aa).

74–81 (GPESSGKT) provides a ligand contact to ATP.

Belongs to the RecA family.

Its subcellular location is the cytoplasm. Functionally, can catalyze the hydrolysis of ATP in the presence of single-stranded DNA, the ATP-dependent uptake of single-stranded DNA by duplex DNA, and the ATP-dependent hybridization of homologous single-stranded DNAs. It interacts with LexA causing its activation and leading to its autocatalytic cleavage. The polypeptide is Protein RecA (Bordetella petrii (strain ATCC BAA-461 / DSM 12804 / CCUG 43448)).